The following is a 308-amino-acid chain: NAD-dependent protein deacylase SIR4 (308 aa).

The transit peptide at 1–16 (MAATKLHPALRNAIRA) directs the protein to the mitochondrion. The 281-residue stretch at 28 to 308 (TFDVQEGIKL…EVLPAALRQL (281 aa)) folds into the Deacetylase sirtuin-type domain. NAD(+) contacts are provided by residues 53–73 (GAGISTDSGIPDYRSPGRPPH) and 129–132 (QNVD). The Proton acceptor role is filled by His147. Zn(2+)-binding residues include Cys155, Cys158, Cys211, and Cys214. Residues 251-253 (GTS), 277-279 (NSG), and Ile297 each bind NAD(+).

The protein belongs to the sirtuin family. Class II subfamily. Requires Zn(2+) as cofactor.

It localises to the mitochondrion matrix. It carries out the reaction N(6)-acetyl-L-lysyl-[protein] + NAD(+) + H2O = 2''-O-acetyl-ADP-D-ribose + nicotinamide + L-lysyl-[protein]. Its function is as follows. NAD-dependent protein deacylase. Catalyzes the NAD-dependent hydrolysis of acyl groups from lysine residues. The polypeptide is NAD-dependent protein deacylase SIR4 (Monosiga brevicollis (Choanoflagellate)).